A 518-amino-acid polypeptide reads, in one-letter code: Calcium and calcium/calmodulin-dependent serine/threonine-protein kinase (518 aa).

In terms of domain architecture, Protein kinase spans 13–300 (YEISEILGRG…AQELLSHPWV (288 aa)). Residues 19 to 27 (LGRGGFSVV) and K44 each bind ATP. D165 (proton acceptor) is an active-site residue. T265 bears the Phosphothreonine mark. The calmodulin-binding stretch occupies residues 323-336 (ARRKLRAAAIASVW). Residues 344–365 (TKKLRSLVGTYDLKEEEIESLR) are a coiled coil. EF-hand domains are found at residues 394 to 429 (SLIPLAPRIFDLFDNNRDGTIDMREILCGFSSLKNS), 430 to 465 (KGDDALRLCFQMYDTDRSGCITKEEVASMLCALPEE), and 472 to 507 (TEPGKLDEIFDLMDANSDGKVTFEEFKAAMQRDSSL). Residues D407, N409, D411, T413, E418, D443, D445, S447, C449, E454, D485, N487, D489, K491, and E496 each coordinate Ca(2+).

It belongs to the protein kinase superfamily. CAMK Ser/Thr protein kinase family. CaMK subfamily. As to quaternary structure, interacts with IPD3. Interacts with CIP73. In terms of processing, autophosphorylation stimulated by calcium. Occurs probably by an intermolecular mechanism. In terms of tissue distribution, mainly expressed in roots and nodules. Detected in leaves, stems and cotyledons.

The protein localises to the nucleus. It catalyses the reaction L-seryl-[protein] + ATP = O-phospho-L-seryl-[protein] + ADP + H(+). It carries out the reaction L-threonyl-[protein] + ATP = O-phospho-L-threonyl-[protein] + ADP + H(+). With respect to regulation, activated by calcium/calmodulin binding after calcium-induced autophosphorylation. Functionally, calcium- and calmodulin-dependent protein kinase necessary and sufficient for dedifferentiation of root cortical cells into nodule initials. Not required for calcium spiking. Acts as central regulator of the nodule organogenesis program. Required for root hair curling and infection thread (IT) formation upon rhizobial infection, and arbuscule formation during arbuscular mycorrhiza (AM) fungal infection. Phosphorylates the downstream target IPD3, a protein required for root infection by symbiotic rhizobia and AM fungi. Phosphorylates the downstream target CIP73, a protein required for root nodule organogenesis. Mediates the phosphorylation of leghemoglobins (e.g. LB1) to modulate their oxygen O(2) affinity, thus regulating the diffusion of oxygen to the bacteroids in nodules. This is Calcium and calcium/calmodulin-dependent serine/threonine-protein kinase from Lotus japonicus (Lotus corniculatus var. japonicus).